Consider the following 173-residue polypeptide: Photosystem I assembly protein Ycf3 (173 aa).

TPR repeat units lie at residues Ala35 to Gln68, Gly72 to Gln105, and Gly120 to Gly153.

This sequence belongs to the Ycf3 family.

The protein resides in the cellular thylakoid membrane. Essential for the assembly of the photosystem I (PSI) complex. May act as a chaperone-like factor to guide the assembly of the PSI subunits. The protein is Photosystem I assembly protein Ycf3 of Prochlorococcus marinus (strain NATL2A).